Reading from the N-terminus, the 405-residue chain is SPbeta prophage-derived uncharacterized protein YonJ (405 aa).

Residues 72–101 (DESNNSLLELELKKVEIMEERKKLQAVKHE) adopt a coiled-coil conformation.

The polypeptide is SPbeta prophage-derived uncharacterized protein YonJ (yonJ) (Bacillus subtilis (strain 168)).